Consider the following 338-residue polypeptide: Ornithine carbamoyltransferase (338 aa).

Carbamoyl phosphate-binding positions include 56–59 (STRT), Arg107, and 134–137 (HPTQ). L-ornithine is bound by residues Asn168, Asp232, and 236-237 (SM). Carbamoyl phosphate contacts are provided by residues 274-275 (CL) and Arg320.

It belongs to the aspartate/ornithine carbamoyltransferase superfamily. OTCase family.

The protein resides in the cytoplasm. It carries out the reaction carbamoyl phosphate + L-ornithine = L-citrulline + phosphate + H(+). The protein operates within amino-acid biosynthesis; L-arginine biosynthesis; L-arginine from L-ornithine and carbamoyl phosphate: step 1/3. In terms of biological role, reversibly catalyzes the transfer of the carbamoyl group from carbamoyl phosphate (CP) to the N(epsilon) atom of ornithine (ORN) to produce L-citrulline. The polypeptide is Ornithine carbamoyltransferase (argI) (Buchnera aphidicola subsp. Acyrthosiphon pisum (strain APS) (Acyrthosiphon pisum symbiotic bacterium)).